We begin with the raw amino-acid sequence, 158 residues long: C-type lectin mannose-binding isoform (158 aa).

The signal sequence occupies residues 1 to 20 (MGRFLLVTLSMLVVTFSLNE). Cystine bridges form between Cys26/Cys37, Cys54/Cys154, and Cys129/Cys146. Residues 33 to 155 (KNGFCYKVFN…CEALYHFICQ (123 aa)) form the C-type lectin domain. Residues 119 to 121 (EPN) carry the Mannose-binding motif. Asn121 carries an N-linked (GlcNAc...) asparagine glycan. Residues Glu127, Asn142, and Asp143 each contribute to the Ca(2+) site.

The protein belongs to the true venom lectin family. Homodimer; disulfide-linked. Expressed by the venom gland.

The protein localises to the secreted. In terms of biological role, mannose-binding lectin that binds to and agglutinates erythrocytes in a calcium-dependent manner. The polypeptide is C-type lectin mannose-binding isoform (Notechis scutatus scutatus (Mainland tiger snake)).